Reading from the N-terminus, the 423-residue chain is Endochitinase 1 (423 aa).

The signal sequence occupies residues 1–22; the sequence is MPSLFAQSLAIIATLQATLGLA. The GH18 domain maps to 39–401; it reads YVNAVYFTNW…GTSSNKLGGP (363 aa). Residues Asn-74, Asn-78, and Asn-96 are each glycosylated (N-linked (GlcNAc...) asparagine). Chitin contacts are provided by residues 103 to 104 and 130 to 133; these read GT and GGWT. Glu-172 serves as the catalytic Proton donor. Residues Tyr-173 and 238–241 contribute to the chitin site; that span reads MAYD. The N-linked (GlcNAc...) asparagine glycan is linked to Asn-248. Trp-378 contributes to the chitin binding site. A disordered region spans residues 380–423; sequence ASSDRSGSQSLIGTSSNKLGGPDSTENLLNYPDSKYDNMRKQMA. The span at 383–407 shows a compositional bias: polar residues; that stretch reads DRSGSQSLIGTSSNKLGGPDSTENL. The segment covering 413-423 has biased composition (basic and acidic residues); that stretch reads SKYDNMRKQMA.

This sequence belongs to the glycosyl hydrolase 18 family. Chitinase class V subfamily.

The protein localises to the secreted. The catalysed reaction is Random endo-hydrolysis of N-acetyl-beta-D-glucosaminide (1-&gt;4)-beta-linkages in chitin and chitodextrins.. Secreted chitinase involved in the degradation of chitin, a component of the cell walls of fungi and exoskeletal elements of some animals (including worms and arthropods). Participates in the infection process and directly acts in the penetration process of the host cuticle. The sequence is that of Endochitinase 1 (chit1) from Metarhizium anisopliae (Entomophthora anisopliae).